The sequence spans 206 residues: Urease accessory protein UreE (206 aa).

The disordered stretch occupies residues 136 to 206 (PEGGAYAEPS…HGHAHAHDRK (71 aa)). Basic and acidic residues-rich tracts occupy residues 148–169 (QGHD…GGHE) and 177–191 (HGHA…EHCG). The segment covering 192–206 (HGHHHHGHAHAHDRK) has biased composition (basic residues).

Belongs to the UreE family.

The protein resides in the cytoplasm. Its function is as follows. Involved in urease metallocenter assembly. Binds nickel. Probably functions as a nickel donor during metallocenter assembly. This is Urease accessory protein UreE from Bradyrhizobium sp. (strain BTAi1 / ATCC BAA-1182).